The following is a 417-amino-acid chain: Signal recognition particle receptor FtsY (417 aa).

GTP is bound by residues 228 to 235 (GINGTGKT), 310 to 314 (DTAGR), and 368 to 371 (TKID).

Belongs to the GTP-binding SRP family. FtsY subfamily. Part of the signal recognition particle protein translocation system, which is composed of SRP and FtsY.

It localises to the cell membrane. The protein resides in the cytoplasm. The enzyme catalyses GTP + H2O = GDP + phosphate + H(+). In terms of biological role, involved in targeting and insertion of nascent membrane proteins into the cytoplasmic membrane. Acts as a receptor for the complex formed by the signal recognition particle (SRP) and the ribosome-nascent chain (RNC). This is Signal recognition particle receptor FtsY from Methanosarcina acetivorans (strain ATCC 35395 / DSM 2834 / JCM 12185 / C2A).